Here is a 314-residue protein sequence, read N- to C-terminus: MTITLPIGLSVTARVPASSANLGPGFDTLGLALGLYDEIVVTTTDSGLQIRVEGEGAADVPWGPSHLVVRAIERGLEAAGVWASGLDVLCRNAIPHSRGLGSSASAAVGGLAAANGLARALDAEIGLTEEQLVQLSSEFEGHPDNASASVLGGAVVSWSCPPAVEGDEPIYSAAKLDVHPDIRAVALVPEERSSTAHTRGLLPELVPHQDASFNASRSALAVVALTARPDLLMAATEDRLHQAQRAPALPLTTRWIGILREAGIAATVSGAGPTVLALSTEPFPVELAEAARADGLRVLELDIADGVEVSTTTV.

95–105 (PHSRGLGSSAS) contacts ATP.

This sequence belongs to the GHMP kinase family. Homoserine kinase subfamily.

It localises to the cytoplasm. It catalyses the reaction L-homoserine + ATP = O-phospho-L-homoserine + ADP + H(+). It participates in amino-acid biosynthesis; L-threonine biosynthesis; L-threonine from L-aspartate: step 4/5. In terms of biological role, catalyzes the ATP-dependent phosphorylation of L-homoserine to L-homoserine phosphate. The polypeptide is Homoserine kinase (Rhodococcus erythropolis (strain PR4 / NBRC 100887)).